Consider the following 88-residue polypeptide: Large ribosomal subunit protein eL31 (88 aa).

This sequence belongs to the eukaryotic ribosomal protein eL31 family.

The protein is Large ribosomal subunit protein eL31 of Methanoregula boonei (strain DSM 21154 / JCM 14090 / 6A8).